The chain runs to 593 residues: DNA primase (593 aa).

The segment at 40 to 64 (CPFHHEKTPSFTVSQKKQFYHCFGC) adopts a CHC2-type zinc-finger fold. In terms of domain architecture, Toprim spans 260-342 (KQLLVVEGYM…GRQLKFIFLP (83 aa)). Residues glutamate 266, aspartate 310, and aspartate 312 each coordinate Mg(2+).

Belongs to the DnaG primase family. In terms of assembly, monomer. Interacts with DnaB. It depends on Zn(2+) as a cofactor. Mg(2+) is required as a cofactor.

It catalyses the reaction ssDNA + n NTP = ssDNA/pppN(pN)n-1 hybrid + (n-1) diphosphate.. Its function is as follows. RNA polymerase that catalyzes the synthesis of short RNA molecules used as primers for DNA polymerase during DNA replication. The sequence is that of DNA primase from Haemophilus influenzae (strain ATCC 51907 / DSM 11121 / KW20 / Rd).